Here is a 214-residue protein sequence, read N- to C-terminus: Ribonuclease HII (214 aa).

The RNase H type-2 domain maps to 26–214 (EIVCGVDEAG…PVRAALDLIR (189 aa)). The a divalent metal cation site is built by aspartate 32, glutamate 33, and aspartate 124.

This sequence belongs to the RNase HII family. Requires Mn(2+) as cofactor. The cofactor is Mg(2+).

It is found in the cytoplasm. The enzyme catalyses Endonucleolytic cleavage to 5'-phosphomonoester.. Functionally, endonuclease that specifically degrades the RNA of RNA-DNA hybrids. The protein is Ribonuclease HII of Burkholderia orbicola (strain MC0-3).